A 220-amino-acid polypeptide reads, in one-letter code: Fructose-6-phosphate aldolase (220 aa).

Residue Lys-85 is the Schiff-base intermediate with substrate of the active site.

The protein belongs to the transaldolase family. Type 3A subfamily. Homodecamer.

It is found in the cytoplasm. The enzyme catalyses beta-D-fructose 6-phosphate = dihydroxyacetone + D-glyceraldehyde 3-phosphate. Catalyzes the reversible formation of fructose 6-phosphate from dihydroxyacetone and D-glyceraldehyde 3-phosphate via an aldolization reaction. This Salmonella choleraesuis (strain SC-B67) protein is Fructose-6-phosphate aldolase.